A 227-amino-acid chain; its full sequence is Cytochrome c oxidase subunit 2 (227 aa).

At 1–14 (MAHPVQLSLQDATS) the chain is on the mitochondrial intermembrane side. The chain crosses the membrane as a helical span at residues 15-45 (PVMEELITFHDHAFMAMSLISFLVLYALLST). Residues 46–59 (LTTKLTNTSITDAQ) lie on the Mitochondrial matrix side of the membrane. A helical transmembrane segment spans residues 60-87 (EMETIWTILPAIILILIALPSLRILYLT). The Mitochondrial intermembrane segment spans residues 88–227 (DEVNDPSFTI…IFEMGPVLTL (140 aa)). The Cu cation site is built by His-161, Cys-196, Glu-198, Cys-200, His-204, and Met-207. A Mg(2+)-binding site is contributed by Glu-198.

This sequence belongs to the cytochrome c oxidase subunit 2 family. Component of the cytochrome c oxidase (complex IV, CIV), a multisubunit enzyme composed of 14 subunits. The complex is composed of a catalytic core of 3 subunits MT-CO1, MT-CO2 and MT-CO3, encoded in the mitochondrial DNA, and 11 supernumerary subunits COX4I, COX5A, COX5B, COX6A, COX6B, COX6C, COX7A, COX7B, COX7C, COX8 and NDUFA4, which are encoded in the nuclear genome. The complex exists as a monomer or a dimer and forms supercomplexes (SCs) in the inner mitochondrial membrane with NADH-ubiquinone oxidoreductase (complex I, CI) and ubiquinol-cytochrome c oxidoreductase (cytochrome b-c1 complex, complex III, CIII), resulting in different assemblies (supercomplex SCI(1)III(2)IV(1) and megacomplex MCI(2)III(2)IV(2)). Found in a complex with TMEM177, COA6, COX18, COX20, SCO1 and SCO2. Interacts with TMEM177 in a COX20-dependent manner. Interacts with COX20. Interacts with COX16. Requires Cu cation as cofactor.

Its subcellular location is the mitochondrion inner membrane. It carries out the reaction 4 Fe(II)-[cytochrome c] + O2 + 8 H(+)(in) = 4 Fe(III)-[cytochrome c] + 2 H2O + 4 H(+)(out). In terms of biological role, component of the cytochrome c oxidase, the last enzyme in the mitochondrial electron transport chain which drives oxidative phosphorylation. The respiratory chain contains 3 multisubunit complexes succinate dehydrogenase (complex II, CII), ubiquinol-cytochrome c oxidoreductase (cytochrome b-c1 complex, complex III, CIII) and cytochrome c oxidase (complex IV, CIV), that cooperate to transfer electrons derived from NADH and succinate to molecular oxygen, creating an electrochemical gradient over the inner membrane that drives transmembrane transport and the ATP synthase. Cytochrome c oxidase is the component of the respiratory chain that catalyzes the reduction of oxygen to water. Electrons originating from reduced cytochrome c in the intermembrane space (IMS) are transferred via the dinuclear copper A center (CU(A)) of subunit 2 and heme A of subunit 1 to the active site in subunit 1, a binuclear center (BNC) formed by heme A3 and copper B (CU(B)). The BNC reduces molecular oxygen to 2 water molecules using 4 electrons from cytochrome c in the IMS and 4 protons from the mitochondrial matrix. This is Cytochrome c oxidase subunit 2 (MT-CO2) from Macaca mulatta (Rhesus macaque).